The chain runs to 609 residues: Protein KINESIN LIGHT CHAIN-RELATED 1 (609 aa).

The disordered stretch occupies residues 1–77; that stretch reads MPAMPGLVSV…TAAVIDVDDP (77 aa). The segment covering 38–55 has biased composition (low complexity); it reads KKTPSSTPSRSKPSPNRS. 10 TPR repeats span residues 140 to 173, 183 to 216, 225 to 258, 267 to 301, 307 to 340, 349 to 382, 392 to 425, 433 to 466, 474 to 507, and 516 to 549; these read AMSL…PDPT, FSGH…QIQT, GETC…HRAH, AADR…IASG, ASID…FKAS, ASVF…YNKP, AGGL…LEDK, AGLE…LRAA, GVVL…LEQE, and LGVY…REEK. The tract at residues 582 to 609 is disordered; sequence LQNLIDPNARPPKKESSAKKWPSLGFKF.

The protein belongs to the kinesin light chain family. In terms of assembly, interacts with IQD1.

Its subcellular location is the cytoplasm. The protein localises to the cytoskeleton. The polypeptide is Protein KINESIN LIGHT CHAIN-RELATED 1 (Arabidopsis thaliana (Mouse-ear cress)).